Here is a 145-residue protein sequence, read N- to C-terminus: Bacilliredoxin GK2368 (145 aa).

The protein belongs to the bacilliredoxin family.

The chain is Bacilliredoxin GK2368 from Geobacillus kaustophilus (strain HTA426).